The following is a 453-amino-acid chain: Probable glycine dehydrogenase (decarboxylating) subunit 1 (453 aa).

This sequence belongs to the GcvP family. N-terminal subunit subfamily. As to quaternary structure, the glycine cleavage system is composed of four proteins: P, T, L and H. In this organism, the P 'protein' is a heterodimer of two subunits.

The catalysed reaction is N(6)-[(R)-lipoyl]-L-lysyl-[glycine-cleavage complex H protein] + glycine + H(+) = N(6)-[(R)-S(8)-aminomethyldihydrolipoyl]-L-lysyl-[glycine-cleavage complex H protein] + CO2. In terms of biological role, the glycine cleavage system catalyzes the degradation of glycine. The P protein binds the alpha-amino group of glycine through its pyridoxal phosphate cofactor; CO(2) is released and the remaining methylamine moiety is then transferred to the lipoamide cofactor of the H protein. The chain is Probable glycine dehydrogenase (decarboxylating) subunit 1 from Methylococcus capsulatus (strain ATCC 33009 / NCIMB 11132 / Bath).